The primary structure comprises 653 residues: Chaperone protein DnaK (653 aa).

T198 bears the Phosphothreonine; by autocatalysis mark. A compositionally biased stretch (low complexity) spans D608–G617. The segment at D608–K653 is disordered. Residues M618–G629 show a composition bias toward gly residues. Acidic residues predominate over residues D639–K653.

It belongs to the heat shock protein 70 family.

Acts as a chaperone. The chain is Chaperone protein DnaK from Magnetococcus marinus (strain ATCC BAA-1437 / JCM 17883 / MC-1).